The following is a 1439-amino-acid chain: MDFSFSFMQGIMGNTIQQPPQLIDSANIRQEDAFDNHSDIVEDGGPTPFEATLQQGFQYPPTTEDLPPLTNGYPPSISLYETQTKYPPYNQYPNGSANGFGAVRNFSPTDYYHSEIPNTRPHEILEKPSPPQPPPPPSVPQTVIPKKTGSPEIKLKITKTIQNGRELFESSLCGDLLNEVQASEHTKSKHESRKEKRKKSNRHESSRSEERRSHKIPKLEPEGQNRPNERVDTAPEKPREEPVLKEAIPVQPILSSVPTTETSTGVKFQVGDLVWSKVGTYPWWPCMVSSDPQLEVHSKINTRGAREYHVQFFSNQPERAWVHEKRVREYKGHEQYEELLAEAAKQASNHSEKQKIRKPRPQRERAQWDIGIAHAEKALKMTREERVEQYTFIYIDKQPEEASSQAKKNVTSKTEVKKPRRPRSVLNSQPEQTNAGEVASSQSSTDLRRQSQRRHTSLEEEEPPPVKIAWKTAAARKSLPASITMHKGSLDLQKCNMSPVVKIEQVFALQNATGDGKFIDQFVYSTKGIGNKTEISVRGQDRLIISSPSQRSEKPAQSASSPEATSGSAGPVEKKQQRRSIRTRSESEKSAEVVPKKKIKKEQVETAPQASLKTGLQKGASEISDSCKPLKKRSRASTDVETASCTYRDTSDSDSRGLSDGQVGFGKQVDSPSATADADASDAQSVDSSLSRRGVGTSKKDTVCQVCEKAGDCLVACEGECCRHFHVECLGLTAVPEGHFTCEECETGQHPCFSCKVSGKDVKRCSVSVCGKFYHEACVRKFPTAIFESKGFRCPQHCCSSCSMEKDIHKASKGRMMRCLRCPVAYHVGDACVAAGSVSVSSHILICSNHSKRSSQSAAINVGFCFVCARGLIVQDHSDPMFSSYAYKSHYLLSESNRAELMKLPMIPSSSASKKRCEKGGRLLCCESCPASFHPECLSIDMPEGCWNCNDCKAGKKLHYKQIVWVKLGNYRQVLWWPAEICSPRSVPLNIQGLKHDLGDFPVFFFGSHDYYWVHQGRVFPYVEGDKHFAEGQTSINKTFKKALEEAAKRFQELKAQRESKEALEMERTSRKPPPYKHIKANKVIGKVQVQVADLSEIPRCNCKPGDENPCGLESQCLNRMSQYECHPQVCPAGDRCQNQCFTKRLYPDAEVIKTERRGWGLRTKRSIKKGEFVNEYVGELIDEEECRLRIKRAHENSVTNFYMLTVTKDRIIDAGPKGNYSRFMNHSCNPNCETQKWTVNGDVRVGLFALCDIPAGMELTFNYNLDCLGNGRTVCHCGADNCSGFLGVRPKSACTSAVDEKTKNAKLKKRRKVKAEAKPIHEDYCFQCGDGGELVMCDKKDCPKAYHLLCLNLTQPPHGKWECPWHRCDECGSVAVSFCEFCPHSFCKAHGKGALVPSALEGRLCCSSHDPASPVSPEYWSKIRCKWESQDSGEEVKE.

The interval 121 to 151 (PHEILEKPSPPQPPPPPSVPQTVIPKKTGSP) is disordered. A compositionally biased stretch (pro residues) spans 128-139 (PSPPQPPPPPSV). Ser-150 is subject to Phosphoserine. Residues 154–157 (KLKI) carry the KIKL motif. Residues 181–247 (QASEHTKSKH…PREEPVLKEA (67 aa)) form a disordered region. A compositionally biased stretch (basic residues) spans 187-201 (KSKHESRKEKRKKSN). Positions 202 to 244 (RHESSRSEERRSHKIPKLEPEGQNRPNERVDTAPEKPREEPVL) are enriched in basic and acidic residues. Residues Lys-218 and Lys-245 each participate in a glycyl lysine isopeptide (Lys-Gly) (interchain with G-Cter in SUMO2) cross-link. The PWWP 1 domain occupies 270–333 (VGDLVWSKVG…EKRVREYKGH (64 aa)). 2 disordered regions span residues 344–367 (AKQA…ERAQ) and 401–466 (EASS…PPPV). Composition is skewed to polar residues over residues 401–413 (EASS…VTSK) and 425–445 (VLNS…QSST). A Glycyl lysine isopeptide (Lys-Gly) (interchain with G-Cter in SUMO2) cross-link involves residue Lys-413. Residue Ser-457 is modified to Phosphoserine. Residues Lys-502 and Lys-532 each participate in a glycyl lysine isopeptide (Lys-Gly) (interchain with G-Cter in SUMO2) cross-link. The segment at 540–695 (QDRLIISSPS…VDSSLSRRGV (156 aa)) is disordered. The segment covering 546 to 568 (SSPSQRSEKPAQSASSPEATSGS) has biased composition (polar residues). The span at 583–595 (TRSESEKSAEVVP) shows a compositional bias: basic and acidic residues. A phosphoserine mark is found at Ser-585, Ser-587, and Ser-590. Lys-628 participates in a covalent cross-link: Glycyl lysine isopeptide (Lys-Gly) (interchain with G-Cter in SUMO2). The segment covering 637 to 648 (STDVETASCTYR) has biased composition (polar residues). Ser-655 is subject to Phosphoserine. The span at 670-691 (DSPSATADADASDAQSVDSSLS) shows a compositional bias: low complexity. PHD-type zinc fingers lie at residues 701 to 748 (DTVC…CETG), 749 to 805 (QHPC…CSME), and 862 to 955 (VGFC…CKAG). Lys-790 carries the N6-acetyllysine modification. The 66-residue stretch at 960-1025 (YKQIVWVKLG…QGRVFPYVEG (66 aa)) folds into the PWWP 2 domain. Residues 1036–1065 (INKTFKKALEEAAKRFQELKAQRESKEALE) are a coiled coil. The region spanning 1096–1146 (SEIPRCNCKPGDENPCGLESQCLNRMSQYECHPQVCPAGDRCQNQCFTKRL) is the AWS domain. The SET domain occupies 1148 to 1265 (PDAEVIKTER…AGMELTFNYN (118 aa)). Lys-1154 participates in a covalent cross-link: Glycyl lysine isopeptide (Lys-Gly) (interchain with G-Cter in SUMO2). The 17-residue stretch at 1272–1288 (GRTVCHCGADNCSGFLG) folds into the Post-SET domain. The segment at 1323–1370 (EDYCFQCGDGGELVMCDKKDCPKAYHLLCLNLTQPPHGKWECPWHRCD) adopts a PHD-type 4; atypical zinc-finger fold.

This sequence belongs to the class V-like SAM-binding methyltransferase superfamily. Histone-lysine methyltransferase family. SET2 subfamily. In terms of assembly, interacts with BRD4. Interacts (via KIKL motif) with BRD3 (via NET domain).

The protein localises to the nucleus. It is found in the chromosome. It catalyses the reaction L-lysyl(4)-[histone H3] + 2 S-adenosyl-L-methionine = N(6),N(6)-dimethyl-L-lysyl(4)-[histone H3] + 2 S-adenosyl-L-homocysteine + 2 H(+). The enzyme catalyses L-lysyl(27)-[histone H3] + 2 S-adenosyl-L-methionine = N(6),N(6)-dimethyl-L-lysyl(27)-[histone H3] + 2 S-adenosyl-L-homocysteine + 2 H(+). Its function is as follows. Histone methyltransferase. Preferentially dimethylates 'Lys-4' and 'Lys-27' of histone H3 forming H3K4me2 and H3K27me2. H3 'Lys-4' methylation represents a specific tag for epigenetic transcriptional activation, while 'Lys-27' is a mark for transcriptional repression. The chain is Histone-lysine N-methyltransferase NSD3 (Nsd3) from Mus musculus (Mouse).